The primary structure comprises 143 residues: Large-conductance mechanosensitive channel (143 aa).

The next 3 membrane-spanning stretches (helical) occupy residues 21 to 41 (VGVI…ADII), 44 to 64 (VVGL…LGTV), and 86 to 106 (GNFI…FMMV).

It belongs to the MscL family. Homopentamer.

It localises to the cell inner membrane. Channel that opens in response to stretch forces in the membrane lipid bilayer. May participate in the regulation of osmotic pressure changes within the cell. This chain is Large-conductance mechanosensitive channel, found in Variovorax paradoxus (strain S110).